Reading from the N-terminus, the 101-residue chain is Small ribosomal subunit protein uS17 (101 aa).

The protein belongs to the universal ribosomal protein uS17 family. As to quaternary structure, part of the 30S ribosomal subunit.

Its function is as follows. One of the primary rRNA binding proteins, it binds specifically to the 5'-end of 16S ribosomal RNA. The polypeptide is Small ribosomal subunit protein uS17 (Koribacter versatilis (strain Ellin345)).